Here is a 502-residue protein sequence, read N- to C-terminus: Mitochondrial fusion and transport protein UGO1 (502 aa).

Residue M1 is modified to N-acetylmethionine. Over 1–293 (MNNNNVTEAT…VINSPDISKS (293 aa)) the chain is Cytoplasmic. The interval 1–294 (MNNNNVTEAT…INSPDISKSF (294 aa)) is binds FZO1. Residues 288-383 (PDISKSFILA…NSFFNKLFDL (96 aa)) form a Solcar repeat. A helical; Signal-anchor for type II membrane protein membrane pass occupies residues 294–314 (FILALGAGVFTSIILLPVDLI). Positions 312 to 502 (DLIRTRLIVT…VDINMEQEKF (191 aa)) are binds MGM1. The Mitochondrial intermembrane portion of the chain corresponds to 315 to 502 (RTRLIVTSFK…VDINMEQEKF (188 aa)).

In terms of assembly, interacts with FZO1 through its cytoplasmic domain and with MGM1 through its mitochondrial intermembrane space domain.

It localises to the mitochondrion outer membrane. Required for mitochondrial fusion as well as normal mitochondrial morphology by bridging the essential interaction between FZO1 and MGM1. May coordinate fusion of inner and outer membranes during mitochondrial fusion. This chain is Mitochondrial fusion and transport protein UGO1, found in Saccharomyces cerevisiae (strain ATCC 204508 / S288c) (Baker's yeast).